The primary structure comprises 223 residues: Thiamine-phosphate synthase (223 aa).

Residues 37–41 and Asp-72 each bind 4-amino-2-methyl-5-(diphosphooxymethyl)pyrimidine; that span reads QFREK. Residues Asp-73 and Asp-92 each contribute to the Mg(2+) site. Ser-110 lines the 4-amino-2-methyl-5-(diphosphooxymethyl)pyrimidine pocket. 136–138 provides a ligand contact to 2-[(2R,5Z)-2-carboxy-4-methylthiazol-5(2H)-ylidene]ethyl phosphate; it reads TQS. Lys-139 provides a ligand contact to 4-amino-2-methyl-5-(diphosphooxymethyl)pyrimidine. 2-[(2R,5Z)-2-carboxy-4-methylthiazol-5(2H)-ylidene]ethyl phosphate contacts are provided by residues Gly-168 and 188-189; that span reads IS.

The protein belongs to the thiamine-phosphate synthase family. It depends on Mg(2+) as a cofactor.

The enzyme catalyses 2-[(2R,5Z)-2-carboxy-4-methylthiazol-5(2H)-ylidene]ethyl phosphate + 4-amino-2-methyl-5-(diphosphooxymethyl)pyrimidine + 2 H(+) = thiamine phosphate + CO2 + diphosphate. It carries out the reaction 2-(2-carboxy-4-methylthiazol-5-yl)ethyl phosphate + 4-amino-2-methyl-5-(diphosphooxymethyl)pyrimidine + 2 H(+) = thiamine phosphate + CO2 + diphosphate. It catalyses the reaction 4-methyl-5-(2-phosphooxyethyl)-thiazole + 4-amino-2-methyl-5-(diphosphooxymethyl)pyrimidine + H(+) = thiamine phosphate + diphosphate. Its pathway is cofactor biosynthesis; thiamine diphosphate biosynthesis; thiamine phosphate from 4-amino-2-methyl-5-diphosphomethylpyrimidine and 4-methyl-5-(2-phosphoethyl)-thiazole: step 1/1. Its function is as follows. Condenses 4-methyl-5-(beta-hydroxyethyl)thiazole monophosphate (THZ-P) and 2-methyl-4-amino-5-hydroxymethyl pyrimidine pyrophosphate (HMP-PP) to form thiamine monophosphate (TMP). The polypeptide is Thiamine-phosphate synthase (Streptococcus agalactiae serotype Ia (strain ATCC 27591 / A909 / CDC SS700)).